Here is a 228-residue protein sequence, read N- to C-terminus: Glucose-induced degradation protein 8-A homolog (228 aa).

A LisH domain is found at 25-57 (QRADMNRLIMNYLVTEGFKEAAEKFRMESGIEP). Residues 63 to 120 (SLDERIKIREMVLKGQIQEAIALINSLHPELLDTNRYLYFHLQQQHLIELIRLRETEA) form the CTLH domain.

It belongs to the GID8 family. As to quaternary structure, identified in the CTLH complex that contains at least MAEA, RMND5A (or alternatively its paralog RMND5B), GID8, WDR26, and RANBP9 and/or RANBP10. Interacts with CTNNB1.

In terms of biological role, core component of the CTLH E3 ubiquitin-protein ligase complex that selectively accepts ubiquitin from UBE2H and mediates ubiquitination and subsequent proteasomal degradation of target proteins. Acts as a positive regulator of Wnt signaling pathway by promoting beta-catenin (CTNNB1) nuclear accumulation. Required for normal Wnt signaling and normal dorsoventral patterning during embryogenesis. This is Glucose-induced degradation protein 8-A homolog (gid8a) from Danio rerio (Zebrafish).